The sequence spans 344 residues: Selenide, water dikinase (344 aa).

Cysteine 16 is a catalytic residue. Residues lysine 19 and 47–49 contribute to the ATP site; that span reads SRD. Aspartate 50 is a Mg(2+) binding site. ATP-binding positions include aspartate 67, aspartate 90, and 138–140; that span reads GHS. Aspartate 90 provides a ligand contact to Mg(2+). Aspartate 226 is a binding site for Mg(2+).

This sequence belongs to the selenophosphate synthase 1 family. Class I subfamily. As to quaternary structure, homodimer. Mg(2+) serves as cofactor.

The catalysed reaction is hydrogenselenide + ATP + H2O = selenophosphate + AMP + phosphate + 2 H(+). Synthesizes selenophosphate from selenide and ATP. This chain is Selenide, water dikinase, found in Pseudomonas aeruginosa (strain ATCC 15692 / DSM 22644 / CIP 104116 / JCM 14847 / LMG 12228 / 1C / PRS 101 / PAO1).